The chain runs to 149 residues: D-aminoacyl-tRNA deacylase (149 aa).

The short motif at 137–138 (GP) is the Gly-cisPro motif, important for rejection of L-amino acids element.

It belongs to the DTD family. In terms of assembly, homodimer.

It localises to the cytoplasm. It catalyses the reaction glycyl-tRNA(Ala) + H2O = tRNA(Ala) + glycine + H(+). The catalysed reaction is a D-aminoacyl-tRNA + H2O = a tRNA + a D-alpha-amino acid + H(+). Functionally, an aminoacyl-tRNA editing enzyme that deacylates mischarged D-aminoacyl-tRNAs. Also deacylates mischarged glycyl-tRNA(Ala), protecting cells against glycine mischarging by AlaRS. Acts via tRNA-based rather than protein-based catalysis; rejects L-amino acids rather than detecting D-amino acids in the active site. By recycling D-aminoacyl-tRNA to D-amino acids and free tRNA molecules, this enzyme counteracts the toxicity associated with the formation of D-aminoacyl-tRNA entities in vivo and helps enforce protein L-homochirality. The polypeptide is D-aminoacyl-tRNA deacylase (Koribacter versatilis (strain Ellin345)).